Reading from the N-terminus, the 253-residue chain is Tetraspanin-3 (253 aa).

The Cytoplasmic portion of the chain corresponds to 1–11; the sequence is MGQCGITSSKT. A helical membrane pass occupies residues 12–32; the sequence is VLVFLNLIFWGAAGILCYVGA. Residues 33 to 50 lie on the Extracellular side of the membrane; it reads YVFITYDDYDHFFEDVYT. Residues 51-71 traverse the membrane as a helical segment; that stretch reads LFPAVVIIAVGALLFIIGLIG. The Cytoplasmic portion of the chain corresponds to 72-85; it reads CCATIRESRCGLAT. The helical transmembrane segment at 86–106 threads the bilayer; sequence FVFILLLVFVTEVVVVVLGYV. Residues 107 to 212 lie on the Extracellular side of the membrane; that stretch reads YRAKVENEVD…KKLQEILMHV (106 aa). N-linked (GlcNAc...) asparagine glycosylation is found at Asn127, Asn152, Asn167, and Asn183. Residues 213–233 form a helical membrane-spanning segment; sequence IWAALAFAAIQLLGMLCACIV. Over 234–253 the chain is Cytoplasmic; sequence LCRRSRDPAYELLITGGTYA.

The protein belongs to the tetraspanin (TM4SF) family. Interacts with claudin-11/CLDN11 and integrins.

The protein localises to the membrane. Regulates the proliferation and migration of oligodendrocytes, a process essential for normal myelination and repair. This Mus musculus (Mouse) protein is Tetraspanin-3 (Tspan3).